The chain runs to 124 residues: Small ribosomal subunit protein uS12c (124 aa).

A disordered region spans residues 1 to 28 (MPTFQQLVRSARKPHAKKTKSPALQGCP). A compositionally biased stretch (basic residues) spans 10-20 (SARKPHAKKTK).

The protein belongs to the universal ribosomal protein uS12 family. As to quaternary structure, part of the 30S ribosomal subunit.

It is found in the plastid. With S4 and S5 plays an important role in translational accuracy. Located at the interface of the 30S and 50S subunits. The sequence is that of Small ribosomal subunit protein uS12c (rps12) from Prototheca wickerhamii.